A 407-amino-acid chain; its full sequence is CCA-adding enzyme (407 aa).

ATP is bound by residues Gly32 and Arg35. 2 residues coordinate CTP: Gly32 and Arg35. 2 residues coordinate Mg(2+): Asp45 and Asp47. ATP-binding residues include Arg116, Asp159, Arg162, Arg165, and Arg168. CTP is bound by residues Arg116, Asp159, Arg162, Arg165, and Arg168.

This sequence belongs to the tRNA nucleotidyltransferase/poly(A) polymerase family. Bacterial CCA-adding enzyme type 3 subfamily. In terms of assembly, homodimer. It depends on Mg(2+) as a cofactor.

It catalyses the reaction a tRNA precursor + 2 CTP + ATP = a tRNA with a 3' CCA end + 3 diphosphate. The enzyme catalyses a tRNA with a 3' CCA end + 2 CTP + ATP = a tRNA with a 3' CCACCA end + 3 diphosphate. Catalyzes the addition and repair of the essential 3'-terminal CCA sequence in tRNAs without using a nucleic acid template. Adds these three nucleotides in the order of C, C, and A to the tRNA nucleotide-73, using CTP and ATP as substrates and producing inorganic pyrophosphate. tRNA 3'-terminal CCA addition is required both for tRNA processing and repair. Also involved in tRNA surveillance by mediating tandem CCA addition to generate a CCACCA at the 3' terminus of unstable tRNAs. While stable tRNAs receive only 3'-terminal CCA, unstable tRNAs are marked with CCACCA and rapidly degraded. The chain is CCA-adding enzyme from Lactiplantibacillus plantarum (strain ATCC BAA-793 / NCIMB 8826 / WCFS1) (Lactobacillus plantarum).